The primary structure comprises 478 residues: Cytochrome c-552 (478 aa).

The N-terminal stretch at 1-26 (MARKTLRARRFFSLIFPFFFITSVYA) is a signal peptide. Residue H94 coordinates heme c. Heme contacts are provided by C122, C125, and K126. Residues C160, C163, H164, C209, C212, and H213 each coordinate heme c. Positions 215, 216, 261, and 263 each coordinate Ca(2+). Y216 is a binding site for substrate. Position 264 (H264) interacts with substrate. Heme c-binding residues include H275, C282, C285, H286, H301, C314, C317, H318, and H393.

The protein belongs to the cytochrome c-552 family. The cofactor is Ca(2+). Requires heme c as cofactor.

It localises to the periplasm. It catalyses the reaction 6 Fe(III)-[cytochrome c] + NH4(+) + 2 H2O = 6 Fe(II)-[cytochrome c] + nitrite + 8 H(+). It participates in nitrogen metabolism; nitrate reduction (assimilation). Catalyzes the reduction of nitrite to ammonia, consuming six electrons in the process. The sequence is that of Cytochrome c-552 from Salmonella dublin (strain CT_02021853).